The following is a 448-amino-acid chain: Asparagine--tRNA ligase (448 aa).

The protein belongs to the class-II aminoacyl-tRNA synthetase family. Homodimer.

Its subcellular location is the cytoplasm. It catalyses the reaction tRNA(Asn) + L-asparagine + ATP = L-asparaginyl-tRNA(Asn) + AMP + diphosphate + H(+). The chain is Asparagine--tRNA ligase from Streptococcus thermophilus (strain ATCC BAA-491 / LMD-9).